The sequence spans 205 residues: Protein MIS12 homolog (205 aa).

A coiled-coil region spans residues 108-205 (PYSEEDFQHL…EKESKRLKIS (98 aa)).

Belongs to the mis12 family. In terms of assembly, component of the MIS12 complex composed of MIS12, DSN1, NSL1 and PMF1. Also interacts with KNL1, CBX3, CBX5, NDC80 and ZWINT.

It is found in the chromosome. The protein localises to the centromere. Its subcellular location is the kinetochore. Part of the MIS12 complex which is required for normal chromosome alignment and segregation and for kinetochore formation during mitosis. Essential for proper kinetochore microtubule attachments. In Homo sapiens (Human), this protein is Protein MIS12 homolog.